A 64-amino-acid chain; its full sequence is Large ribosomal subunit protein bL35 (64 aa).

This sequence belongs to the bacterial ribosomal protein bL35 family.

The sequence is that of Large ribosomal subunit protein bL35 from Shewanella sediminis (strain HAW-EB3).